Here is a 158-residue protein sequence, read N- to C-terminus: Protein Smg homolog (158 aa).

This sequence belongs to the Smg family.

This is Protein Smg homolog from Shewanella sp. (strain ANA-3).